The sequence spans 739 residues: Phosphoribosylformylglycinamidine synthase subunit PurL (739 aa).

The active site involves His-54. ATP contacts are provided by Tyr-57 and Lys-96. Glu-98 is a binding site for Mg(2+). Substrate contacts are provided by residues 99–102 and Arg-121; that span reads SHNH. His-100 (proton acceptor) is an active-site residue. Residue Asp-122 coordinates Mg(2+). A substrate-binding site is contributed by Gln-245. A Mg(2+)-binding site is contributed by Asp-273. 317 to 319 contributes to the substrate binding site; that stretch reads ESQ. Asp-500 and Gly-537 together coordinate ATP. Residue Asn-538 coordinates Mg(2+). Ser-540 contacts substrate.

The protein belongs to the FGAMS family. As to quaternary structure, monomer. Part of the FGAM synthase complex composed of 1 PurL, 1 PurQ and 2 PurS subunits.

Its subcellular location is the cytoplasm. It carries out the reaction N(2)-formyl-N(1)-(5-phospho-beta-D-ribosyl)glycinamide + L-glutamine + ATP + H2O = 2-formamido-N(1)-(5-O-phospho-beta-D-ribosyl)acetamidine + L-glutamate + ADP + phosphate + H(+). It functions in the pathway purine metabolism; IMP biosynthesis via de novo pathway; 5-amino-1-(5-phospho-D-ribosyl)imidazole from N(2)-formyl-N(1)-(5-phospho-D-ribosyl)glycinamide: step 1/2. Its function is as follows. Part of the phosphoribosylformylglycinamidine synthase complex involved in the purines biosynthetic pathway. Catalyzes the ATP-dependent conversion of formylglycinamide ribonucleotide (FGAR) and glutamine to yield formylglycinamidine ribonucleotide (FGAM) and glutamate. The FGAM synthase complex is composed of three subunits. PurQ produces an ammonia molecule by converting glutamine to glutamate. PurL transfers the ammonia molecule to FGAR to form FGAM in an ATP-dependent manner. PurS interacts with PurQ and PurL and is thought to assist in the transfer of the ammonia molecule from PurQ to PurL. The sequence is that of Phosphoribosylformylglycinamidine synthase subunit PurL from Bacillus cereus (strain ZK / E33L).